We begin with the raw amino-acid sequence, 530 residues long: Protein P80 (530 aa).

Residues 1–22 (MKVISGLLFFILISCSLFLVQG) form the signal peptide. The chain crosses the membrane as a helical span at residues 491–511 (MLVAMTFNVALFFAVIAGVLV).

It belongs to the SLC31A transporter family.

It localises to the late endosome membrane. This chain is Protein P80 (p80), found in Dictyostelium discoideum (Social amoeba).